The following is a 513-amino-acid chain: Sterol 14-alpha demethylase (513 aa).

The helical transmembrane segment at 10–30 (FTLVSAYAAAGLLAIIVLNLL) threads the bilayer. Residues Asn37 and Asn406 are each glycosylated (N-linked (GlcNAc...) asparagine). Heme is bound at residue Cys453.

It belongs to the cytochrome P450 family. Requires heme as cofactor.

The protein localises to the endoplasmic reticulum membrane. It catalyses the reaction a 14alpha-methyl steroid + 3 reduced [NADPH--hemoprotein reductase] + 3 O2 = a Delta(14) steroid + formate + 3 oxidized [NADPH--hemoprotein reductase] + 4 H2O + 4 H(+). It carries out the reaction a 14alpha-methyl steroid + reduced [NADPH--hemoprotein reductase] + O2 = a 14alpha-hydroxymethyl steroid + oxidized [NADPH--hemoprotein reductase] + H2O + H(+). The catalysed reaction is a 14alpha-hydroxymethyl steroid + reduced [NADPH--hemoprotein reductase] + O2 = a 14alpha-formyl steroid + oxidized [NADPH--hemoprotein reductase] + 2 H2O + H(+). The enzyme catalyses a 14alpha-formyl steroid + reduced [NADPH--hemoprotein reductase] + O2 = a Delta(14) steroid + formate + oxidized [NADPH--hemoprotein reductase] + H2O + 2 H(+). It catalyses the reaction lanosterol + 3 reduced [NADPH--hemoprotein reductase] + 3 O2 = 4,4-dimethyl-5alpha-cholesta-8,14,24-trien-3beta-ol + formate + 3 oxidized [NADPH--hemoprotein reductase] + 4 H2O + 4 H(+). It carries out the reaction lanosterol + reduced [NADPH--hemoprotein reductase] + O2 = 32-hydroxylanosterol + oxidized [NADPH--hemoprotein reductase] + H2O + H(+). The catalysed reaction is 32-hydroxylanosterol + reduced [NADPH--hemoprotein reductase] + O2 = 32-oxolanosterol + oxidized [NADPH--hemoprotein reductase] + 2 H2O + H(+). The enzyme catalyses 32-oxolanosterol + reduced [NADPH--hemoprotein reductase] + O2 = 4,4-dimethyl-5alpha-cholesta-8,14,24-trien-3beta-ol + formate + oxidized [NADPH--hemoprotein reductase] + H2O + 2 H(+). It catalyses the reaction eburicol + 3 reduced [NADPH--hemoprotein reductase] + 3 O2 = 14-demethyleburicol + formate + 3 oxidized [NADPH--hemoprotein reductase] + 4 H2O + 4 H(+). It carries out the reaction eburicol + reduced [NADPH--hemoprotein reductase] + O2 = 32-hydroxyeburicol + oxidized [NADPH--hemoprotein reductase] + H2O + H(+). The catalysed reaction is 32-hydroxyeburicol + reduced [NADPH--hemoprotein reductase] + O2 = 32-oxoeburicol + oxidized [NADPH--hemoprotein reductase] + 2 H2O + H(+). The enzyme catalyses 32-oxoeburicol + reduced [NADPH--hemoprotein reductase] + O2 = 14-demethyleburicol + formate + oxidized [NADPH--hemoprotein reductase] + H2O + 2 H(+). The protein operates within steroid biosynthesis; sterol biosynthesis. Its function is as follows. Sterol 14alpha-demethylase, encoded by cyp51A, cyp51B and cyp51C, that plays a critical role in the third module of ergosterol biosynthesis pathway, being ergosterol the major sterol component in fungal membranes that participates in a variety of functions. The third module or late pathway involves the ergosterol synthesis itself through consecutive reactions that mainly occur in the endoplasmic reticulum (ER) membrane. In filamentous fungi, during the initial step of this module, lanosterol (lanosta-8,24-dien-3beta-ol) can be metabolized to eburicol. Sterol 14alpha-demethylase catalyzes the three-step oxidative removal of the 14alpha-methyl group (C-32) of both these sterols in the form of formate, and converts eburicol and lanosterol to 14-demethyleburicol (4,4,24-trimethylergosta-8,14,24(28)-trienol) and 4,4-dimethyl-5alpha-cholesta-8,14,24-trien-3beta-ol, respectively, which are further metabolized by other enzymes in the pathway to ergosterol. Can also use substrates not intrinsic to fungi, such as 24,25-dihydrolanosterol (DHL), producing 4,4'-dimethyl-8,14-cholestadien-3-beta-ol, but at lower rates than the endogenous substrates. As a target of azole drugs, plays a crucial role in azole susceptibility. In Aspergillus flavus (strain ATCC 200026 / FGSC A1120 / IAM 13836 / NRRL 3357 / JCM 12722 / SRRC 167), this protein is Sterol 14-alpha demethylase.